Consider the following 587-residue polypeptide: MQIFLFFFSLILCFVLISSQTLEDDKKALLHFLSSFNSSRLHWNQSSDVCHSWTGVTCNENGDRIVSVRLPAVGFNGLIPPFTISRLSSLKFLSLRKNHFTGDFPSDFTNLKSLTHLYLQHNHLSGPLLAIFSELKNLKVLDLSNNGFNGSIPTSLSGLTSLQVLNLANNSFSGEIPNLHLPKLSQINLSNNKLIGTIPKSLQRFQSSAFSGNNLTERKKQRKTPFGLSQLAFLLILSAACVLCVSGLSFIMITCFGKTRISGKLRKRDSSSPPGNWTSRDDNTEEGGKIIFFGGRNHLFDLDDLLSSSAEVLGKGAFGTTYKVTMEDMSTVVVKRLKEVVVGRREFEQQMEIIGMIRHENVAELKAYYYSKDDKLAVYSYYNHGSLFEILHGNRGRYHRVPLDWDARLRIATGAARGLAKIHEGKFIHGNIKSSNIFLDSQCYGCIGDVGLTTIMRSLPQTTCLTSGYHAPEITDTRRSTQFSDVYSFGVVLLELLTGKSPVSQAELVPTGGENMDLASWIRSVVAKEWTGEVFDMEILSQSGGFEEEMVEMLQIGLACVALKQQERPHIAQVLKLIEDIRSVDAE.

Residues 1 to 19 (MQIFLFFFSLILCFVLISS) form the signal peptide. Topologically, residues 20-232 (QTLEDDKKAL…KTPFGLSQLA (213 aa)) are extracellular. N-linked (GlcNAc...) asparagine glycans are attached at residues Asn-37 and Asn-44. LRR repeat units lie at residues 89–112 (SLKF…TNLK), 113–136 (SLTH…SELK), 137–160 (NLKV…SGLT), 161–183 (SLQV…HLPK), and 184–205 (LSQI…LQRF). N-linked (GlcNAc...) asparagine glycosylation is found at Asn-149, Asn-169, Asn-188, and Asn-214. The helical transmembrane segment at 233-253 (FLLILSAACVLCVSGLSFIMI) threads the bilayer. Topologically, residues 254 to 587 (TCFGKTRISG…IEDIRSVDAE (334 aa)) are cytoplasmic. The Protein kinase domain maps to 307–581 (SSSAEVLGKG…AQVLKLIEDI (275 aa)). Ser-309 carries the post-translational modification Phosphoserine. Residues 313-321 (LGKGAFGTT) and Lys-335 each bind ATP. Ser-386 is subject to Phosphoserine. Phosphothreonine occurs at positions 462, 463, 466, and 477.

The protein localises to the cell membrane. This is Putative inactive receptor-like protein kinase At1g64210 from Arabidopsis thaliana (Mouse-ear cress).